A 93-amino-acid polypeptide reads, in one-letter code: Alpha-defensin 10 (93 aa).

An N-terminal signal peptide occupies residues 1-19; sequence MKTLVLLSALVLLAFQVQA. Positions 20 to 58 are excised as a propeptide; sequence DPIQNTDEETKTEEQPGEDDQAVSVSFGDPEGSSLQEES. Residues 22 to 56 are disordered; that stretch reads IQNTDEETKTEEQPGEDDQAVSVSFGDPEGSSLQE. Intrachain disulfides connect C64/C92, C66/C81, and C71/C91.

It belongs to the alpha-defensin family. In terms of tissue distribution, paneth cells of the small bowel.

It localises to the secreted. Functionally, probably contributes to the antimicrobial barrier function of the small bowel mucosa. The polypeptide is Alpha-defensin 10 (Defa10) (Mus musculus (Mouse)).